A 174-amino-acid chain; its full sequence is UPF0316 protein lin1888 (174 aa).

Helical transmembrane passes span 4 to 24, 36 to 56, and 62 to 82; these read GIFIVATIFVVNILYVTIYTV, LAALSSVFEMIIYVVALSLVL, and IANVLAYAVGFGVGIIVGMKI.

It belongs to the UPF0316 family.

The protein localises to the cell membrane. The sequence is that of UPF0316 protein lin1888 from Listeria innocua serovar 6a (strain ATCC BAA-680 / CLIP 11262).